The sequence spans 876 residues: GRB2-associated and regulator of MAPK protein 1 (876 aa).

The tract at residues 12-320 (KDVKWSSVAV…HLVKGESWPE (309 aa)) is CABIT. Tyr-105 and Tyr-453 each carry phosphotyrosine. A disordered region spans residues 496–572 (IPGTLGAAVK…SPSPTLSYYS (77 aa)). Residues 498-550 (GTLGAAVKSSDTALPPPPVPPKSEAVREECRLLNAPPVPPRSAKPLSTSPSIP) form a necessary for interaction with GRB2 region. Positions 558–572 (RQQTRSPSPTLSYYS) are enriched in polar residues. Phosphoserine occurs at positions 610 and 614. Disordered regions lie at residues 626 to 664 (WPNHYSGASESQTRSDFLLDPSRSYSYPRQKTPGTPKRN) and 738 to 763 (ASETSPLPLKIDGAEEDPKSGSPDLS). Polar residues-rich tracts occupy residues 631–640 (SGASESQTRS) and 648–658 (RSYSYPRQKTP). The region spanning 811–876 (LSIEEVSKSL…QFINGWRPKI (66 aa)) is the SAM domain.

Belongs to the GAREM family. Isoform 1 interacts with EGFR. Isoform 1 interacts (via proline-rich domain and phosphorylated at Tyr-105 and Tyr-453) with GRB2 (via SH3 domains); the interaction occurs upon EGF stimulation. Isoform 1 interacts (phosphorylated at Tyr-453) with PTPN11; the interaction increases MAPK/ERK activity and does not affect the GRB2/SOS complex formation. Isoform 2 does not interact with GRB2. On EGF stimulation, phosphorylated on Tyr-105 and Tyr-453. In terms of tissue distribution, isoform 1 is ubiquitously expressed.

Functionally, acts as an adapter protein that plays a role in intracellular signaling cascades triggered either by the cell surface activated epidermal growth factor receptor and/or cytoplasmic protein tyrosine kinases. Promotes activation of the MAPK/ERK signaling pathway. Plays a role in the regulation of cell proliferation. This is GRB2-associated and regulator of MAPK protein 1 (GAREM1) from Homo sapiens (Human).